We begin with the raw amino-acid sequence, 335 residues long: Tetraacyldisaccharide 4'-kinase (335 aa).

ATP is bound at residue Thr-59–Thr-66.

The protein belongs to the LpxK family.

The catalysed reaction is a lipid A disaccharide + ATP = a lipid IVA + ADP + H(+). Its pathway is glycolipid biosynthesis; lipid IV(A) biosynthesis; lipid IV(A) from (3R)-3-hydroxytetradecanoyl-[acyl-carrier-protein] and UDP-N-acetyl-alpha-D-glucosamine: step 6/6. In terms of biological role, transfers the gamma-phosphate of ATP to the 4'-position of a tetraacyldisaccharide 1-phosphate intermediate (termed DS-1-P) to form tetraacyldisaccharide 1,4'-bis-phosphate (lipid IVA). This is Tetraacyldisaccharide 4'-kinase from Vibrio campbellii (strain ATCC BAA-1116).